A 228-amino-acid polypeptide reads, in one-letter code: L-ribulose-5-phosphate 4-epimerase UlaF (228 aa).

Substrate-binding positions include 26-27 (GN), 43-44 (SG), and 72-73 (SS). Zn(2+) is bound by residues D74, H93, and H95. The active-site Proton donor/acceptor is D118. H167 lines the Zn(2+) pocket. Y225 acts as the Proton donor/acceptor in catalysis.

This sequence belongs to the aldolase class II family. AraD/FucA subfamily. The cofactor is Zn(2+).

The catalysed reaction is L-ribulose 5-phosphate = D-xylulose 5-phosphate. The protein operates within cofactor degradation; L-ascorbate degradation; D-xylulose 5-phosphate from L-ascorbate: step 4/4. In terms of biological role, catalyzes the isomerization of L-ribulose 5-phosphate to D-xylulose 5-phosphate. Is involved in the anaerobic L-ascorbate utilization. The protein is L-ribulose-5-phosphate 4-epimerase UlaF of Escherichia fergusonii (strain ATCC 35469 / DSM 13698 / CCUG 18766 / IAM 14443 / JCM 21226 / LMG 7866 / NBRC 102419 / NCTC 12128 / CDC 0568-73).